A 130-amino-acid chain; its full sequence is Small ribosomal subunit protein uS9 (130 aa).

Belongs to the universal ribosomal protein uS9 family.

This is Small ribosomal subunit protein uS9 from Bordetella avium (strain 197N).